Reading from the N-terminus, the 105-residue chain is Small ribosomal subunit protein uS10c (105 aa).

Belongs to the universal ribosomal protein uS10 family. Part of the 30S ribosomal subunit.

Its subcellular location is the plastid. The protein resides in the chloroplast. Its function is as follows. Involved in the binding of tRNA to the ribosomes. The polypeptide is Small ribosomal subunit protein uS10c (Gracilaria tenuistipitata var. liui (Red alga)).